The following is a 196-amino-acid chain: dITP/XTP pyrophosphatase (196 aa).

A substrate-binding site is contributed by 10–15; it reads TSNKGK. Aspartate 71 acts as the Proton acceptor in catalysis. Aspartate 71 contacts Mg(2+). Substrate contacts are provided by residues serine 72, 156 to 159, lysine 179, and 184 to 185; these read FGYD and HR.

It belongs to the HAM1 NTPase family. In terms of assembly, homodimer. Mg(2+) is required as a cofactor.

The catalysed reaction is XTP + H2O = XMP + diphosphate + H(+). The enzyme catalyses dITP + H2O = dIMP + diphosphate + H(+). It carries out the reaction ITP + H2O = IMP + diphosphate + H(+). Functionally, pyrophosphatase that catalyzes the hydrolysis of nucleoside triphosphates to their monophosphate derivatives, with a high preference for the non-canonical purine nucleotides XTP (xanthosine triphosphate), dITP (deoxyinosine triphosphate) and ITP. Seems to function as a house-cleaning enzyme that removes non-canonical purine nucleotides from the nucleotide pool, thus preventing their incorporation into DNA/RNA and avoiding chromosomal lesions. This is dITP/XTP pyrophosphatase from Haemophilus ducreyi (strain 35000HP / ATCC 700724).